Here is a 257-residue protein sequence, read N- to C-terminus: Probable enoyl-CoA hydratase echA17 (257 aa).

The protein belongs to the enoyl-CoA hydratase/isomerase family.

It catalyses the reaction a (3S)-3-hydroxyacyl-CoA = a (2E)-enoyl-CoA + H2O. The catalysed reaction is a 4-saturated-(3S)-3-hydroxyacyl-CoA = a (3E)-enoyl-CoA + H2O. Functionally, could possibly oxidize fatty acids using specific components. The sequence is that of Probable enoyl-CoA hydratase echA17 (echA17) from Mycolicibacterium paratuberculosis (strain ATCC BAA-968 / K-10) (Mycobacterium paratuberculosis).